The primary structure comprises 630 residues: Altered inheritance of mitochondria protein 9, mitochondrial (630 aa).

Residues 1-40 (MLKLTSRVGPKRLSSGLKSSSFKVNATIISKKFQSSLNSK) constitute a mitochondrion transit peptide.

It belongs to the AIM9 family.

The protein resides in the mitochondrion. The sequence is that of Altered inheritance of mitochondria protein 9, mitochondrial (AIM9) from Debaryomyces hansenii (strain ATCC 36239 / CBS 767 / BCRC 21394 / JCM 1990 / NBRC 0083 / IGC 2968) (Yeast).